The sequence spans 89 residues: Putative defensin-like protein 230 (89 aa).

The signal sequence occupies residues 1-26 (MRSVIWFIVSYTLMLLVLRGGKEVEA). Disulfide bonds link C30–C84, C40–C65, C48–C78, and C63–C80.

Belongs to the DEFL family.

It is found in the secreted. This is Putative defensin-like protein 230 (SCRL24) from Arabidopsis thaliana (Mouse-ear cress).